A 528-amino-acid chain; its full sequence is Protein MGF 505-7R (528 aa).

ANK repeat units follow at residues E129 to V158, H261 to K290, and I292 to N322.

This sequence belongs to the asfivirus MGF 505 family. Interacts with host STING1. Interacts with host JAK1; this interaction leads to JAK1 degradation. Interacts with host JAK2; this interaction leads to JAK2 degradation. Interacts with host RELA; this interaction inhibits NF-kappa-B promoter activity.

It is found in the host cytoplasm. Functionally, plays a role in virus cell tropism, and may be required for efficient virus replication in macrophages. Interferes with host NF-kappa-B promoter activity mediated by TLR8. Mechanistically, inhibits the phosphorylation and subsequent nuclear translocation of host NF-kappa-B RELA subunit downstream of TLR8. Promotes the expression of the autophagy-related protein host ULK1 to degrade host STING and inhibit the interferon response. Also inhibits JAK1- and JAK2-mediated signaling and thus negatively regulates the IFN-gamma signaling. This chain is Protein MGF 505-7R, found in Ornithodoros (relapsing fever ticks).